We begin with the raw amino-acid sequence, 755 residues long: Kelch-like protein 5 (755 aa).

Residues 152 to 184 (LDRPEVDDGTSEEENESDSSSCRTSNSSQTLSS) form a disordered region. Residues 158-168 (DDGTSEEENES) are compositionally biased toward acidic residues. Positions 169–184 (DSSSCRTSNSSQTLSS) are enriched in low complexity. The BTB domain maps to 220–287 (CDVILVAGDR…AYTGRLELKE (68 aa)). Kelch repeat units follow at residues 468-514 (TLFA…VLDD), 515-561 (KLYV…VLEG), 563-608 (MYAV…VLSG), 609-655 (KLYA…TWNG), 657-708 (LYAI…LLGD), and 709-754 (KLYA…VTVK).

As to expression, expressed in adrenal gland, ovary and thyroid gland and less abundantly in lymph node, prostate, spinal cord, testis and trachea.

The protein localises to the cytoplasm. The protein resides in the cytoskeleton. The chain is Kelch-like protein 5 (KLHL5) from Homo sapiens (Human).